The chain runs to 318 residues: Cell growth regulator with EF hand domain protein 1 (318 aa).

The first 19 residues, 1-19, serve as a signal peptide directing secretion; the sequence is MLPLTMTVLILLLLPTGQA. EF-hand domains follow at residues 69–104 and 114–149; these read SREQVLLYLFALHDYDQSGQLDGLELLSMLTAALAP and PVILIVDKVLETQDLNGDGLMTPAELINFPGVALRH. Ca(2+)-binding residues include aspartate 82, aspartate 84, serine 86, glutamine 88, glutamate 93, aspartate 127, asparagine 129, aspartate 131, and glutamate 138. The interval 177-318 is disordered; that stretch reads LRQETQEAPG…HIVQVENDEI (142 aa). Basic and acidic residues-rich tracts occupy residues 186–202 and 223–233; these read GPREEAKGQVEARRESL and GEAEGQAEAKG. A run of 3 repeats spans residues 219-235, 236-252, and 253-269. Positions 219–286 are 4 X 17 AA approximate tandem repeats of P-G-P-R-G-E-A-G-G-Q-A-E-A-[KR]-G-D-A; that stretch reads PGPRGEAEGQ…GGQAEARENG (68 aa). Residues 235–272 show a composition bias toward low complexity; that stretch reads APGPRGEAGGQAEAEGDAPGPRGEAGGQAEAEGDAPGP. The 4; approximate repeat unit spans residues 270-286; sequence PGPRGEAGGQAEARENG. A compositionally biased stretch (basic and acidic residues) spans 281-293; sequence EARENGEEAKELP.

Post-translationally, probably digested extracellularly by an unknown serine protease generating extremely hydrophobic bioactive peptides.

It localises to the secreted. Its function is as follows. Mediates cell-cell adhesion in a calcium-dependent manner. Able to inhibit growth in several cell lines. The chain is Cell growth regulator with EF hand domain protein 1 from Homo sapiens (Human).